The chain runs to 432 residues: Argininosuccinate lyase (432 aa).

This sequence belongs to the lyase 1 family. Argininosuccinate lyase subfamily.

The protein localises to the cytoplasm. The enzyme catalyses 2-(N(omega)-L-arginino)succinate = fumarate + L-arginine. It participates in amino-acid biosynthesis; L-arginine biosynthesis; L-arginine from L-ornithine and carbamoyl phosphate: step 3/3. The polypeptide is Argininosuccinate lyase (Xanthomonas axonopodis pv. citri (strain 306)).